Consider the following 365-residue polypeptide: MKKLTVAISAVAASVLMAMSAQAAEIYNKDSNKLDLYGKVNAKHYFSSNDADDGDTTYARLGFKGETQINDQLTGFGQWEYEFKGNRAESQGSSKDKTRLAFAGLKFGDYGSIDYGRNYGVAYDIGAWTDVLPEFGGDTWTQTDVFMTQRATGVATYRNNDFFGLVDGLNFAAQYQGKNDRSDFDNYTEGNGDGFGFSATYEYEGFGIGATYAKSDRTDTQVNAGKVLPEVFASGKNAEVWAAGLKYDANNIYLATTYSETQNMTVFADHFVANKAQNFEAVAQYQFDFGLRPSVAYLQSKGKDLGVWGDQDLVKYVDVGATYYFNKNMSTFVDYKINLLDKNDFTKALGVSTDDIVAVGLVYQF.

The N-terminal stretch at 1 to 23 (MKKLTVAISAVAASVLMAMSAQA) is a signal peptide.

Belongs to the Gram-negative porin family. In terms of assembly, homotrimer.

It localises to the cell outer membrane. The protein is Putative outer membrane porin protein NmpC (nmpC) of Escherichia coli (strain K12).